Reading from the N-terminus, the 453-residue chain is Mogroside IIIx synthase (453 aa).

His-21 serves as the catalytic Proton acceptor. Asp-122 acts as the Charge relay in catalysis. The UDP-alpha-D-glucose site is built by Ser-273, Gln-336, Trp-354, Asn-355, Ser-356, Glu-359, Asp-375, and Gln-376.

Belongs to the UDP-glycosyltransferase family. Highly expressed in mature fruits.

It carries out the reaction mogroside IIE + UDP-alpha-D-glucose = mogroside IIIX + UDP + H(+). The enzyme catalyses mogroside III + UDP-alpha-D-glucose = mogroside IV + UDP + H(+). The catalysed reaction is mogroside III + UDP-alpha-D-glucose = siamenoside I + UDP + H(+). It catalyses the reaction mogroside IV + UDP-alpha-D-glucose = mogroside V + UDP + H(+). It participates in secondary metabolite biosynthesis; terpenoid biosynthesis. Functionally, UDP-glycosyltransferase involved in the biosynthesis of cucurbitacin and mogroside tetracyclic triterpene natural products (e.g. siamenoside I and mogrosides IV, V and VI). Cucurbitacins have cytotoxic properties and exhibit deterrent taste as a defense barrier against herbivores. Mogrosides are nonsugar highly oxygenated compounds used as high-intensity zero-calorie sweeteners; they also possess pharmacological properties such as regulating immunity, lowering blood sugar and lipid levels, protecting the liver, and acting as antioxidants and antitumor agents. Catalyzes the branched glucosylations of mogroside II-E, mogroside III and mogroside IV. This chain is Mogroside IIIx synthase, found in Siraitia grosvenorii (Monk's fruit).